The following is a 235-amino-acid chain: Probable septum site-determining protein MinC (235 aa).

Residues 104–125 (KAVRPAPVEPATPSEPPQNANP) form a disordered region. The span at 110–119 (PVEPATPSEP) shows a compositional bias: pro residues.

This sequence belongs to the MinC family. As to quaternary structure, interacts with MinD and FtsZ.

Functionally, cell division inhibitor that blocks the formation of polar Z ring septums. Rapidly oscillates between the poles of the cell to destabilize FtsZ filaments that have formed before they mature into polar Z rings. Prevents FtsZ polymerization. This Salmonella enteritidis PT4 (strain P125109) protein is Probable septum site-determining protein MinC.